Consider the following 139-residue polypeptide: MKFTRMVKPNEVERKWHVIDAEGKTFGRLVTEIATLLRGKHKPNYTPHVDCGDYVVVINASKVKVSGNKESKEYHRHTGYFGGVKSEKLAELREKNPEKLFKLATRGMLPKTKLGRAMLKKLKVYPGSEHPHTAQVKGN.

The protein belongs to the universal ribosomal protein uL13 family. As to quaternary structure, part of the 50S ribosomal subunit.

In terms of biological role, this protein is one of the early assembly proteins of the 50S ribosomal subunit, although it is not seen to bind rRNA by itself. It is important during the early stages of 50S assembly. This Nitratiruptor sp. (strain SB155-2) protein is Large ribosomal subunit protein uL13.